The chain runs to 347 residues: Ribosomal RNA small subunit methyltransferase C (347 aa).

This sequence belongs to the methyltransferase superfamily. RsmC family. As to quaternary structure, monomer.

Its subcellular location is the cytoplasm. It catalyses the reaction guanosine(1207) in 16S rRNA + S-adenosyl-L-methionine = N(2)-methylguanosine(1207) in 16S rRNA + S-adenosyl-L-homocysteine + H(+). Specifically methylates the guanine in position 1207 of 16S rRNA in the 30S particle. The chain is Ribosomal RNA small subunit methyltransferase C from Yersinia pseudotuberculosis serotype O:1b (strain IP 31758).